The chain runs to 2104 residues: MTTSGESADQQNDKLFRYLKKVAVELDEARARLREYEQRATEPVAVVGIGCRFPGGADGPEGLWDLVSQGRDAVTEFPNDRGWDTEGLFDPDPDAEGKTYTRWGAFVENATNFDAGFFGIPPSEVLAMDPQQRLMLEVSWEALEHAGIDPMSLRGSSTGVFTGIFAPSYGGKDVGALQGYGLTGSPVSVASGRVAYVLGLEGPALSVDTACSSSLVAIHWAMASLRSGECDMALAGGVTVMGLPSIFVGFSRQRGLAADGRCKAFAAAADGTGWGEGAGVLVLERLSDAQRNGHNVLAVVRGSAINQDGASNGLTAPNGLAQQRVIQAALANCGLTSADVDVVEAHGTATTLGDPIEAEALLATYGQGRPTDQPLWVGSIKSNMGHTQAAAGVAGVIKMVQAMRHGLMPASLHVDEPSKRVDWESGAVSVLAEARDWPDAGRPRRAGVSSFGISGTNAHVILEEAPAPEAVPDSESNKGEPSLPVVPWVISARSAEALTAQAGRLLAHVQADPQSNPVDIGFSLAGRSAFEHRAVVVGADRQQLLTGLATLADGAPGAGVVTGQAGSVGKTAVVFPGQGSQRIGMARELHDQLPVFAEAFDAVADELDRHLRIPLREVMWGSDAALLDSTEFAQPALFAVEVALFAALQRWGLQPDFVMGHSVGELSAAYVAGVLTLADAAMLVVARGRLMQALPAGGAMVAVAAAEDEVLPSLTDGVGIAAINAPKSVVISGAEAAVTAISDQFAQQGRRVHRLAVSHAFHSPLMEPMLEEFARIAAQVEAREPQIALVSNVTGELASADGGFGSAQYWVEHVRRAVRFADSARQLHTLGVTHFVEVGPGSGLTGSIEQSLAPAEAVVVSMLGKDRPEVASVLTAFGQLFSTGMSVDWPAVFAGSGATRVDLPTYAFQRRRFWEVPGADGPADATGLGLGGAEHALLGAVVERPDSGGVVLTGRLALADQPWLADHVIGGVVLFPGAGFVELAIRAGDEVGCAVVEELVLAAPLVLHPGMGVQVQVIVGAADDSGNRALSVYSRGDQSEDWLLNAEGMLGVEAASSGADLSVWPPEGAESVDISDGYAQLADRGYAYGPGFQGLVGVWRRDSELFAEVVAPSGVAVDKMGMHPVVLDAVLHALGLTAEQNPDSDETKLPFCWRGVSLHAGGAGRVRARLTMSGPDSISVEIADAAGLPVLTVGALVTRAMSAAQLRAAVAAAGGGAPDQGPLDVIWSPIPLSGSGTNGSAQPAVVSWADFCAGGDGGAAGDAGVVVWEPNPAGEDVVGSVYAATHAALEVLQSWFDGDRAGTLVVLTHGAVAMPGENVSDLAGAAVWGIVRSAQAENPGRIVLVDADAAVEAAELVAVGEPQLVVRSGAAHAARLAPAAPLLAVPADESAWRLAAGGGGTLEDLVIEPCPEVQAPLAAGQVRVAVRAVGVNFRDVVAALGMYPGEAPPLGAEGAGVVLEVGPQVSGVAVGDSVMGFLGGAGPLSVVDQQLITRMPQGWSFAQAAAVPVVFLTALFGLQDLAKIQPGESVLIHAGTGGVGMAAVQLARHWGVEIFVTASRGKWDTLRAMGFDDDHIGDSRTLDFEEKFLAVTDGRGVDVVLDSLAGDFVDASLRLLVRGGRFLEMGKTDIRDADKIAANYPGVWYRAFDLSEAGPVRMQEMLAEVRELFDTAVLHRLPVTTWDVRCAPAAFRFMSQARHIGKVVLTMPSALADGLADATVLITGATGAVGAVLARHMLDAYGVRHLVLASRRGDRAEGAAELAAELSEAGANVQVVACDVADRDAVEAMLARLSGEYPPVRGVIHAAGVLDDAVISSLTPERIDTVLRAKVDAAWNLHEATLDLDLSMFVLCSSIAATVGSPGQGNYSAANSFLDGLAAHRQAAGLAGISVAWGLWEQSGGMAAHLSSRDLARMSRSGLAPMNPEQAVGLLDAVLAINHPLMVATLLDRPALEARAQAGGLPPLFAGVVRRPRRRQIEDTGDAAQSKSALAERLNGLSAGERQDALVGLVCLQAAAVLGRPSPEDIDPEAGFQDLGFDSLTAVELRNRLKSATGLTLPPTVIFDHPTPTAIAEYVGRQIPDSQATQAEEEKLPESDGEMVSVTA.

The Ketosynthase family 3 (KS3) domain occupies 41–464; sequence TEPVAVVGIG…GTNAHVILEE (424 aa). Residues cysteine 211, histidine 346, and histidine 386 each act as for beta-ketoacyl synthase activity in the active site. Residues 571–887 are acyltransferase; that stretch reads TAVVFPGQGS…GQLFSTGMSV (317 aa). Residue serine 662 is the For acyltransferase activity of the active site. The segment at 935–1057 is N-terminal hotdog fold; it reads HALLGAVVER…GMLGVEAASS (123 aa). Residues 935–1095 are dehydratase; it reads HALLGAVVER…YAYGPGFQGL (161 aa). The PKS/mFAS DH domain maps to 935-1207; that stretch reads HALLGAVVER…TRAMSAAQLR (273 aa). Histidine 967 (proton acceptor; for dehydratase activity) is an active-site residue. The tract at residues 1069–1207 is C-terminal hotdog fold; that stretch reads AESVDISDGY…TRAMSAAQLR (139 aa). Aspartate 1128 (proton donor; for dehydratase activity) is an active-site residue. An enoylreductase region spans residues 1400–1705; sequence GTLEDLVIEP…QARHIGKVVL (306 aa). NADP(+) is bound by residues 1530-1547 and 1719-1734; these read VLIH…VQLA and TVLI…AVLA. Positions 1718–1899 are beta-ketoacyl reductase (KR); sequence ATVLITGATG…SVAWGLWEQS (182 aa). The Carrier domain occupies 2004-2079; the sequence is DALVGLVCLQ…AIAEYVGRQI (76 aa). O-(pantetheine 4'-phosphoryl)serine is present on serine 2039. A disordered region spans residues 2081 to 2104; that stretch reads DSQATQAEEEKLPESDGEMVSVTA.

Belongs to the thiolase-like superfamily. Beta-ketoacyl-ACP synthases family. Pantetheine 4'-phosphate serves as cofactor.

The catalysed reaction is a fatty acyl-[ACP] + malonyl-[ACP] + H(+) = a 3-oxoacyl-[ACP] + holo-[ACP] + CO2. It participates in lipid metabolism; fatty acid biosynthesis. In terms of biological role, catalyzes the elongation by iterative transfer of p-hydroxybenzoyl group from FadD22 (pHBA-S-FAdD22) to form p-hydroxyphenylalkanoate (pHPA) intermediates during phenolphthiocerol (PPOL) biosynthesis. PPOL is an important intermediate in the biosynthesis of phenolic glycolipid (mycosid B). The polypeptide is Phenolphthiocerol synthesis polyketide synthase type I Pks15/1 (pks15/1) (Mycobacterium marinum (strain ATCC BAA-535 / M)).